Reading from the N-terminus, the 252-residue chain is Chitooligosaccharide deacetylase (252 aa).

Positions 61 and 125 each coordinate Mg(2+).

The protein belongs to the YdjC deacetylase family. ChbG subfamily. Homodimer. It depends on Mg(2+) as a cofactor.

It is found in the cytoplasm. The enzyme catalyses N,N'-diacetylchitobiose + H2O = N-acetyl-beta-D-glucosaminyl-(1-&gt;4)-D-glucosamine + acetate. It catalyses the reaction diacetylchitobiose-6'-phosphate + H2O = N'-monoacetylchitobiose-6'-phosphate + acetate. Its pathway is glycan degradation; chitin degradation. Involved in the degradation of chitin. ChbG is essential for growth on the acetylated chitooligosaccharides chitobiose and chitotriose but is dispensable for growth on cellobiose and chitosan dimer, the deacetylated form of chitobiose. Deacetylation of chitobiose-6-P and chitotriose-6-P is necessary for both the activation of the chb promoter by the regulatory protein ChbR and the hydrolysis of phosphorylated beta-glucosides by the phospho-beta-glucosidase ChbF. Catalyzes the removal of only one acetyl group from chitobiose-6-P to yield monoacetylchitobiose-6-P, the inducer of ChbR and the substrate of ChbF. This is Chitooligosaccharide deacetylase from Escherichia coli (strain 55989 / EAEC).